We begin with the raw amino-acid sequence, 205 residues long: Imidazole glycerol phosphate synthase subunit HisH (205 aa).

In terms of domain architecture, Glutamine amidotransferase type-1 spans 1–205; sequence MIALVDYGGG…FFKMALGDKK (205 aa). Residue C79 is the Nucleophile of the active site. Residues H181 and E183 contribute to the active site.

In terms of assembly, heterodimer of HisH and HisF.

It is found in the cytoplasm. It carries out the reaction 5-[(5-phospho-1-deoxy-D-ribulos-1-ylimino)methylamino]-1-(5-phospho-beta-D-ribosyl)imidazole-4-carboxamide + L-glutamine = D-erythro-1-(imidazol-4-yl)glycerol 3-phosphate + 5-amino-1-(5-phospho-beta-D-ribosyl)imidazole-4-carboxamide + L-glutamate + H(+). The enzyme catalyses L-glutamine + H2O = L-glutamate + NH4(+). It participates in amino-acid biosynthesis; L-histidine biosynthesis; L-histidine from 5-phospho-alpha-D-ribose 1-diphosphate: step 5/9. Its function is as follows. IGPS catalyzes the conversion of PRFAR and glutamine to IGP, AICAR and glutamate. The HisH subunit catalyzes the hydrolysis of glutamine to glutamate and ammonia as part of the synthesis of IGP and AICAR. The resulting ammonia molecule is channeled to the active site of HisF. The protein is Imidazole glycerol phosphate synthase subunit HisH of Dehalococcoides mccartyi (strain ATCC BAA-2266 / KCTC 15142 / 195) (Dehalococcoides ethenogenes (strain 195)).